Consider the following 319-residue polypeptide: HTH-type transcriptional regulator YidZ (319 aa).

An HTH lysR-type domain is found at 8–65 (LDLNLLLCLQLLMQERSVTKAAKRINVTPSAVSKSLAKLRAWFDDPLFVNSPLGLSPT). Residues 25–44 (VTKAAKRINVTPSAVSKSLA) constitute a DNA-binding region (H-T-H motif).

It belongs to the LysR transcriptional regulatory family.

Involved in anaerobic NO protection. This is HTH-type transcriptional regulator YidZ from Escherichia coli (strain K12 / MC4100 / BW2952).